A 333-amino-acid chain; its full sequence is MFKIGDIQLKNRVVLAPMAGVCNSAFRLTVKEFGAGLVCAEMVSDKAILYNNARTMGMLYIDEREKPLSLQIFGGKKETLVEAAKFVDQNTTADIIDINMGCPVPKITKCDAGAKWLLDPDKIYEMVSAVVDAVNKPVTVKMRMGWDEDHIFAVKNAQAVERAGGKAVALHGRTRVQMYEGTANWDIIKEVKQSVSIPVIGNGDVKTPQDAKRMLDETGVDGVMIGRAALGNPWMIYRTVQYLETGKLKEEPQVREKMAVCKLHLDRLIDLKGENVAVREMRKHAAWYLKGVKGNANVRNEINHCETREEFVQLLDAFTVEVEAKELQNAKVG.

FMN contacts are provided by residues 17-19 and glutamine 71; that span reads PMA. Cysteine 102 functions as the Proton donor in the catalytic mechanism. FMN contacts are provided by residues lysine 141, 202 to 204, and 226 to 227; these read NGD and GR.

This sequence belongs to the Dus family. The cofactor is FMN.

It carries out the reaction a 5,6-dihydrouridine in tRNA + NAD(+) = a uridine in tRNA + NADH + H(+). The catalysed reaction is a 5,6-dihydrouridine in tRNA + NADP(+) = a uridine in tRNA + NADPH + H(+). Functionally, catalyzes the synthesis of 5,6-dihydrouridine (D), a modified base found in the D-loop of most tRNAs, via the reduction of the C5-C6 double bond in target uridines. In Bacillus subtilis (strain 168), this protein is Probable tRNA-dihydrouridine synthase 1 (dus1).